The following is a 371-amino-acid chain: MSLEPFKHSEALTFGVELELQLVNRHDYDLAPFAPDLLRALKGAQHAGDIKPEISPSMIEISTGICHTYQQALDELTTMRDLMQAASRSLNIGISGGGTHPFQQWADRIISDSPRYQYISELYGYLAKQFTVFGQHVHIGCPSADESLFLLHAIGRYVPHFVALAASSPYVQGVDTGFASARLNSVAAFPMSGRAPFLLTWDAFTAYFEKMRNTGVIESMKDFYWDIRPKPEFGTIEVRVMDTPLTVERACDIAAYIQMLARYLLLSRPFMPQEDDYLVYTFNRFQACRFGLEGEYVHPNELTRRPIAEHILSICDALVPHAEALGSMQALANIRALAENRNGDAEWLRQVDADARTQRETVRQACERWAA.

This sequence belongs to the glutamate--cysteine ligase type 2 family. YbdK subfamily.

It catalyses the reaction L-cysteine + L-glutamate + ATP = gamma-L-glutamyl-L-cysteine + ADP + phosphate + H(+). Its function is as follows. ATP-dependent carboxylate-amine ligase which exhibits weak glutamate--cysteine ligase activity. The chain is Putative glutamate--cysteine ligase 2 from Cupriavidus pinatubonensis (strain JMP 134 / LMG 1197) (Cupriavidus necator (strain JMP 134)).